Here is a 66-residue protein sequence, read N- to C-terminus: Large ribosomal subunit protein bL33c (66 aa).

The protein belongs to the bacterial ribosomal protein bL33 family.

Its subcellular location is the plastid. It is found in the chloroplast. The polypeptide is Large ribosomal subunit protein bL33c (Cicer arietinum (Chickpea)).